A 218-amino-acid chain; its full sequence is Riboflavin synthase (218 aa).

Lumazine-binding repeat units lie at residues 1–97 (MFTG…LGGH) and 98–194 (LVSG…EKLI). 2,4-dihydroxypteridine is bound by residues 4-6 (GII), 48-50 (CLT), 62-67 (DLSLET), 101-103 (GHV), Lys136, 145-147 (SLT), and 159-164 (TIVPHT).

In terms of assembly, homotrimer.

It carries out the reaction 2 6,7-dimethyl-8-(1-D-ribityl)lumazine + H(+) = 5-amino-6-(D-ribitylamino)uracil + riboflavin. The protein operates within cofactor biosynthesis; riboflavin biosynthesis; riboflavin from 2-hydroxy-3-oxobutyl phosphate and 5-amino-6-(D-ribitylamino)uracil: step 2/2. Its function is as follows. Catalyzes the dismutation of two molecules of 6,7-dimethyl-8-ribityllumazine, resulting in the formation of riboflavin and 5-amino-6-(D-ribitylamino)uracil. The protein is Riboflavin synthase (ribE) of Photobacterium leiognathi.